The following is a 97-amino-acid chain: TKVDLTVEKGSDAKTLVLNIKYTRPGDTLAEVELRQHGSEEWEPMTKKGNLWEVKSAKPLTGPMNFRFLSKGGMKNVFDEVIPTAFTVGKTYTPEYN.

Residues 14 to 94 form the Expansin-like CBD domain; that stretch reads KTLVLNIKYT…AFTVGKTYTP (81 aa).

The protein belongs to the expansin family. Expansin B subfamily.

Its subcellular location is the secreted. In Lolium perenne (Perennial ryegrass), this protein is Pollen allergen Lol p 3.